A 984-amino-acid chain; its full sequence is Ephrin type-B receptor 1 (984 aa).

Positions methionine 1–alanine 17 are cleaved as a signal peptide. Topologically, residues methionine 18 to proline 540 are extracellular. Positions glutamate 19 to glutamine 201 constitute an Eph LBD domain. Fibronectin type-III domains lie at valine 322–alanine 432 and alanine 433–aspartate 528. N-linked (GlcNAc...) asparagine glycans are attached at residues asparagine 334, asparagine 426, and asparagine 480. The helical transmembrane segment at leucine 541–cysteine 563 threads the bilayer. The Cytoplasmic segment spans residues serine 564 to alanine 984. The residue at position 600 (tyrosine 600) is a Phosphotyrosine. Positions valine 619–isoleucine 882 constitute a Protein kinase domain. Residues isoleucine 625–valine 633 and lysine 651 contribute to the ATP site. The Proton acceptor role is filled by aspartate 744. Residues threonine 911–glutamine 975 form the SAM domain. The residue at position 928 (tyrosine 928) is a Phosphotyrosine; by autocatalysis. Positions alanine 982–alanine 984 match the PDZ-binding motif.

The protein belongs to the protein kinase superfamily. Tyr protein kinase family. Ephrin receptor subfamily. As to quaternary structure, heterotetramer upon binding of the ligand. The heterotetramer is composed of an ephrin dimer and a receptor dimer. Oligomerization is probably required to induce biological responses. Interacts with EPHB6; transphosphorylates EPHB6 to form an active signaling complex. Interacts with PICK1. Interacts (through Tyr-594) with NCK1 (via SH2 domain); activates the JUN cascade to regulate cell adhesion. The ligand-activated form interacts (through Tyr-928) with GRB7 and GRB10 (via SH2 domains). The ligand-activated form interacts (residues within the catalytic domain) with GRB2 (via SH2 domain). Interacts with GRB2, SHC1 and SRC; activates the MAPK/ERK cascade to regulate cell migration. Interacts with CBL; regulates receptor degradation through ubiquitination. Interacts with ACP1. In terms of processing, phosphorylated. Autophosphorylation is stimulated by the ligand EFNB1. Required for interaction with SH2 domain-containing interactors, for activation of the MAPK/ERK and JUN signaling cascades and for ubiquitination by CBL. Ubiquitinated; (EFNB1)ligand-induced poly- and/or multi-ubiquitination by CBL is regulated by SRC and leads to lysosomal degradation. Preferentially expressed in brain.

It is found in the cell membrane. The protein resides in the early endosome membrane. The protein localises to the cell projection. Its subcellular location is the dendrite. It carries out the reaction L-tyrosyl-[protein] + ATP = O-phospho-L-tyrosyl-[protein] + ADP + H(+). In terms of biological role, receptor tyrosine kinase which binds promiscuously transmembrane ephrin-B family ligands residing on adjacent cells, leading to contact-dependent bidirectional signaling into neighboring cells. The signaling pathway downstream of the receptor is referred to as forward signaling while the signaling pathway downstream of the ephrin ligand is referred to as reverse signaling. Cognate/functional ephrin ligands for this receptor include EFNB1, EFNB2 and EFNB3. During nervous system development, regulates retinal axon guidance redirecting ipsilaterally ventrotemporal retinal ganglion cells axons at the optic chiasm midline. This probably requires repulsive interaction with EFNB2. In the adult nervous system together with EFNB3, regulates chemotaxis, proliferation and polarity of the hippocampus neural progenitors. In addition to its role in axon guidance also plays an important redundant role with other ephrin-B receptors in development and maturation of dendritic spines and synapse formation. May also regulate angiogenesis. More generally, may play a role in targeted cell migration and adhesion. Upon activation by EFNB1 and probably other ephrin-B ligands activates the MAPK/ERK and the JNK signaling cascades to regulate cell migration and adhesion respectively. Involved in the maintenance of the pool of satellite cells (muscle stem cells) by promoting their self-renewal and reducing their activation and differentiation. This Homo sapiens (Human) protein is Ephrin type-B receptor 1 (EPHB1).